Here is a 298-residue protein sequence, read N- to C-terminus: tRNA-cytidine(32) 2-sulfurtransferase (298 aa).

Residues 48–53 carry the PP-loop motif motif; that stretch reads SGGKDS. Residues cysteine 123, cysteine 126, and cysteine 214 each coordinate [4Fe-4S] cluster.

The protein belongs to the TtcA family. In terms of assembly, homodimer. Mg(2+) serves as cofactor. The cofactor is [4Fe-4S] cluster.

It localises to the cytoplasm. The catalysed reaction is cytidine(32) in tRNA + S-sulfanyl-L-cysteinyl-[cysteine desulfurase] + AH2 + ATP = 2-thiocytidine(32) in tRNA + L-cysteinyl-[cysteine desulfurase] + A + AMP + diphosphate + H(+). Its pathway is tRNA modification. Functionally, catalyzes the ATP-dependent 2-thiolation of cytidine in position 32 of tRNA, to form 2-thiocytidine (s(2)C32). The sulfur atoms are provided by the cysteine/cysteine desulfurase (IscS) system. The sequence is that of tRNA-cytidine(32) 2-sulfurtransferase from Nitrosospira multiformis (strain ATCC 25196 / NCIMB 11849 / C 71).